We begin with the raw amino-acid sequence, 353 residues long: UPF0283 membrane protein YPTS_2342 (353 aa).

3 consecutive transmembrane segments (helical) span residues 71-91 (MVTA…VQWV), 101-121 (IALG…GSVV), and 214-234 (ESAL…FIAW).

The protein belongs to the UPF0283 family.

The protein resides in the cell inner membrane. The sequence is that of UPF0283 membrane protein YPTS_2342 from Yersinia pseudotuberculosis serotype IB (strain PB1/+).